A 340-amino-acid chain; its full sequence is HTH-type transcriptional regulator PtxS (340 aa).

One can recognise an HTH lacI-type domain in the interval 12–67; it reads VTINQVAEAAGVSKASVSRYIGGDRQLLADATARRIERAIDQLDYRPNQMARGLKR. The H-T-H motif DNA-binding region spans 14–33; it reads INQVAEAAGVSKASVSRYIG.

As to quaternary structure, interacts with PtxR in the absence of 2-ketogluconate. Binding of the 2-ketogluconate effector to PtxS causes PtxS/PtxR complex dissociation.

With respect to regulation, 2-ketogluconate acts as a molecular effector and causes dissociation of the PtxS/PtxR complex. In terms of biological role, negatively regulates glucose metabolism by binding directly to the promoter region of the kgu and gad operons. It also negatively regulates its own synthesis. Its function is as follows. In addition, in pathogenic strains, PtxS modulates PtxR activity in response to 2-ketogluconate. In the presence of PtxR, which also binds to the kgu and gad promoter regions, PtxS and PtxR form a tight complex, creating a DNA-loop that prevents RNA polymerase promoter access and expression of the glucose metabolism genes. Binding of the 2-ketogluconate effector to PtxS causes PtxS/PtxR complex dissociation and leads to the dissolution of the repression DNA-loop, facilitating the entry of the RNA polymerase and enabling the transcription of the genes. Also plays an important role in the regulation of the expression of the virulence factor exotoxin A (toxA). PtxS does not bind directly to the toxA promoter but negatively regulates the production of exotoxin A by binding to PtxR and interfering with its positive regulator activity. In the presence of 2-ketogluconate, PtxS is released and PtxR can recruit RNA polymerase. The polypeptide is HTH-type transcriptional regulator PtxS (Pseudomonas aeruginosa (strain ATCC 15692 / DSM 22644 / CIP 104116 / JCM 14847 / LMG 12228 / 1C / PRS 101 / PAO1)).